The following is a 277-amino-acid chain: Large ribosomal subunit protein uL2 (277 aa).

Positions 222-259 are disordered; sequence GSVMNPNDHPHGGGEGKSPVGRPSPVTPWGKPALGYKT.

It belongs to the universal ribosomal protein uL2 family. Part of the 50S ribosomal subunit. Forms a bridge to the 30S subunit in the 70S ribosome.

Functionally, one of the primary rRNA binding proteins. Required for association of the 30S and 50S subunits to form the 70S ribosome, for tRNA binding and peptide bond formation. It has been suggested to have peptidyltransferase activity; this is somewhat controversial. Makes several contacts with the 16S rRNA in the 70S ribosome. The protein is Large ribosomal subunit protein uL2 of Clostridium beijerinckii (strain ATCC 51743 / NCIMB 8052) (Clostridium acetobutylicum).